We begin with the raw amino-acid sequence, 556 residues long: Arginine--tRNA ligase 1 (556 aa).

Residues 132-142 (ANPTGDLHLGH) carry the 'HIGH' region motif.

This sequence belongs to the class-I aminoacyl-tRNA synthetase family. As to quaternary structure, monomer.

It localises to the cytoplasm. The enzyme catalyses tRNA(Arg) + L-arginine + ATP = L-arginyl-tRNA(Arg) + AMP + diphosphate. This is Arginine--tRNA ligase 1 from Bacillus anthracis.